We begin with the raw amino-acid sequence, 414 residues long: 3-phosphoshikimate 1-carboxyvinyltransferase (414 aa).

Residues Lys20, Ser21, and Arg25 each contribute to the 3-phosphoshikimate site. Phosphoenolpyruvate is bound at residue Lys20. Phosphoenolpyruvate-binding residues include Gly85 and Arg113. 3-phosphoshikimate is bound by residues Ser154, Ser155, Gln156, Ser181, Asp296, and Lys323. Gln156 is a binding site for phosphoenolpyruvate. The active-site Proton acceptor is Asp296. Arg327, Arg371, and Lys395 together coordinate phosphoenolpyruvate.

This sequence belongs to the EPSP synthase family. Monomer.

Its subcellular location is the cytoplasm. It catalyses the reaction 3-phosphoshikimate + phosphoenolpyruvate = 5-O-(1-carboxyvinyl)-3-phosphoshikimate + phosphate. It participates in metabolic intermediate biosynthesis; chorismate biosynthesis. Functionally, catalyzes the transfer of the enolpyruvyl moiety of phosphoenolpyruvate (PEP) to the 5-hydroxyl of shikimate-3-phosphate (S3P) to produce enolpyruvyl shikimate-3-phosphate and inorganic phosphate. In Saccharolobus islandicus (strain M.14.25 / Kamchatka #1) (Sulfolobus islandicus), this protein is 3-phosphoshikimate 1-carboxyvinyltransferase.